The sequence spans 181 residues: Inorganic pyrophosphatase 2 (181 aa).

Substrate is bound by residues lysine 30, arginine 44, and tyrosine 56. Mg(2+) contacts are provided by aspartate 66, aspartate 71, and aspartate 103. Tyrosine 142 is a substrate binding site.

It belongs to the PPase family. As to quaternary structure, homohexamer. It depends on Mg(2+) as a cofactor.

It is found in the cytoplasm. It carries out the reaction diphosphate + H2O = 2 phosphate + H(+). Catalyzes the hydrolysis of inorganic pyrophosphate (PPi) forming two phosphate ions. The sequence is that of Inorganic pyrophosphatase 2 from Pseudomonas syringae pv. tomato (strain ATCC BAA-871 / DC3000).